We begin with the raw amino-acid sequence, 264 residues long: Wtf element wtf11 (264 aa).

Polar residues predominate over residues 1 to 12 (MNSNYVPLTSSV). Residues 1-26 (MNSNYVPLTSSVDVEEKMESENGVDL) are disordered. 4 helical membrane passes run 107–127 (LLFV…VIFG), 145–165 (LSWF…YDFW), 180–200 (WKNT…GFFV), and 217–237 (SLFA…FETL).

It belongs to the WTF family.

The protein resides in the membrane. May act in meiotic drive. The chain is Wtf element wtf11 from Schizosaccharomyces pombe (strain 972 / ATCC 24843) (Fission yeast).